Consider the following 310-residue polypeptide: Homoserine kinase (310 aa).

91–101 lines the ATP pocket; the sequence is PLARGLGSSAA.

Belongs to the GHMP kinase family. Homoserine kinase subfamily.

It localises to the cytoplasm. The catalysed reaction is L-homoserine + ATP = O-phospho-L-homoserine + ADP + H(+). The protein operates within amino-acid biosynthesis; L-threonine biosynthesis; L-threonine from L-aspartate: step 4/5. Functionally, catalyzes the ATP-dependent phosphorylation of L-homoserine to L-homoserine phosphate. The chain is Homoserine kinase from Bacillus pumilus (strain SAFR-032).